Reading from the N-terminus, the 614-residue chain is Acetylcholinesterase (614 aa).

Residues Met-1–Ala-31 form the signal peptide. Cys-100 and Cys-127 are oxidised to a cystine. Trp-117 is a galanthamine binding site. Residue Trp-117 coordinates huperzine A. Gly-153 lines the huprine W pocket. Position 164 (Tyr-164) interacts with huperzine A. Glu-233–Ser-234 serves as a coordination point for galanthamine. Residue Ser-234 participates in huprine W binding. Catalysis depends on Ser-234, which acts as the Acyl-ester intermediate. Cys-288 and Cys-303 are joined by a disulfide. Asn-296 carries N-linked (GlcNAc...) asparagine glycosylation. Catalysis depends on Glu-365, which acts as the Charge relay system. A galanthamine-binding site is contributed by Tyr-368. Residue Tyr-368 coordinates huperzine A. Asn-381 carries N-linked (GlcNAc...) asparagine glycosylation. Cys-440 and Cys-560 are joined by a disulfide. Huprine W contacts are provided by Trp-470 and His-478. His-478 (charge relay system) is an active-site residue. Asn-495 carries N-linked (GlcNAc...) asparagine glycosylation. The GPI-anchor amidated glycine moiety is linked to residue Phe-588.

This sequence belongs to the type-B carboxylesterase/lipase family. In terms of assembly, interacts with PRIMA1. The interaction with PRIMA1 is required to anchor it to the basal lamina of cells and organize into tetramers. Isoform H generates GPI-anchored dimers; disulfide linked. Isoform T generates multiple structures, ranging from monomers and dimers to collagen-tailed and hydrophobic-tailed forms, in which catalytic tetramers are associated with anchoring proteins that attach them to the basal lamina or to cell membranes. In the collagen-tailed forms, isoform T subunits are associated with a specific collagen, COLQ, which triggers the formation of isoform T tetramers, from monomers and dimers. Isoform R may be monomeric. As to expression, isoform H is highly expressed in erythrocytes.

The protein localises to the synapse. Its subcellular location is the secreted. It is found in the cell membrane. The protein resides in the nucleus. It catalyses the reaction acetylcholine + H2O = choline + acetate + H(+). Hydrolyzes rapidly the acetylcholine neurotransmitter released into the synaptic cleft allowing to terminate the signal transduction at the neuromuscular junction. Role in neuronal apoptosis. This chain is Acetylcholinesterase, found in Homo sapiens (Human).